The primary structure comprises 126 residues: uncharacterized protein (126 aa).

Positions M1–A27 are cleaved as a signal peptide. The interval M93 to E126 is disordered. Residues E101–E126 are compositionally biased toward basic and acidic residues.

This is an uncharacterized protein from Bacillus subtilis (strain 168).